A 920-amino-acid polypeptide reads, in one-letter code: Isoleucine--tRNA ligase (920 aa).

The short motif at 57–67 is the 'HIGH' region element; the sequence is PYANGDIHLGH. E560 is an L-isoleucyl-5'-AMP binding site. A 'KMSKS' region motif is present at residues 601-605; it reads KMSKS. K604 is a binding site for ATP. The Zn(2+) site is built by C890, C893, C910, and C913.

Belongs to the class-I aminoacyl-tRNA synthetase family. IleS type 1 subfamily. In terms of assembly, monomer. It depends on Zn(2+) as a cofactor.

It is found in the cytoplasm. The enzyme catalyses tRNA(Ile) + L-isoleucine + ATP = L-isoleucyl-tRNA(Ile) + AMP + diphosphate. Functionally, catalyzes the attachment of isoleucine to tRNA(Ile). As IleRS can inadvertently accommodate and process structurally similar amino acids such as valine, to avoid such errors it has two additional distinct tRNA(Ile)-dependent editing activities. One activity is designated as 'pretransfer' editing and involves the hydrolysis of activated Val-AMP. The other activity is designated 'posttransfer' editing and involves deacylation of mischarged Val-tRNA(Ile). The protein is Isoleucine--tRNA ligase of Caldicellulosiruptor saccharolyticus (strain ATCC 43494 / DSM 8903 / Tp8T 6331).